The sequence spans 240 residues: Uridylate kinase (240 aa).

An ATP-binding site is contributed by 12–15 (KLSG). Residues 20-25 (GDQGYG) form an involved in allosteric activation by GTP region. Gly54 serves as a coordination point for UMP. 2 residues coordinate ATP: Gly55 and Arg59. Residues Asp74 and 135–142 (TGNPYFST) contribute to the UMP site. 3 residues coordinate ATP: Asn163, Tyr169, and Asp172.

The protein belongs to the UMP kinase family. In terms of assembly, homohexamer.

Its subcellular location is the cytoplasm. It carries out the reaction UMP + ATP = UDP + ADP. It participates in pyrimidine metabolism; CTP biosynthesis via de novo pathway; UDP from UMP (UMPK route): step 1/1. With respect to regulation, allosterically activated by GTP. Inhibited by UTP. Its function is as follows. Catalyzes the reversible phosphorylation of UMP to UDP. The polypeptide is Uridylate kinase (Oceanobacillus iheyensis (strain DSM 14371 / CIP 107618 / JCM 11309 / KCTC 3954 / HTE831)).